A 383-amino-acid polypeptide reads, in one-letter code: Pantothenate kinase 1 (383 aa).

Belongs to the type II pantothenate kinase family. Highly expressed in leaves and developing seeds. Expressed in roots, stems and flowers.

The catalysed reaction is (R)-pantothenate + ATP = (R)-4'-phosphopantothenate + ADP + H(+). It participates in cofactor biosynthesis; coenzyme A biosynthesis; CoA from (R)-pantothenate: step 1/5. Regulated by feedback inhibition by malonyl-CoA. Catalyzes the phosphorylation of pantothenate the first step in CoA biosynthesis. May play a role in the physiological regulation of the intracellular CoA concentration. Functionally redudant with PANK2. In Arabidopsis thaliana (Mouse-ear cress), this protein is Pantothenate kinase 1 (PANK1).